The sequence spans 81 residues: Elsinochrome C biosynthesis cluster protein SNOG_08613 (81 aa).

In terms of biological role, part of the gene cluster that mediates the biosynthesis of elsinochrome C, a perelyenequinone phytotoxin structurally similar to cercosporin. The first step of elsinochrome C biosynthesis is performed by the polyketide synthase elcA which catalyzes the formation of nor-toralactone. The starter unit acyltransferase (SAT) domain of elcA initiates polyketide extension by the selective utilization of acetyl-CoA, which is elongated to the heptaketide in the beta-ketoacyl synthase (KS) domain by successive condensations with six malonyl units introduced by the malonyl acyltransferase (MAT) domain. The product template (PT) domain catalyzes C4-C9 and C2-C11 aldol cyclizations and dehydrations to a trihydroxynaphthalene, which is thought to be delivered to the thioesterase (TE) domain for product release. The bifunctional enzyme elcB then methylates nor-toralactone to toralactone before conducting an unusual oxidative aromatic ring opening. The next step in perylenequinone biosynthesis is an O-methylation at the nascent OH-6 of the elcB product performed by the O-methyltransferase elcD. The oxidative coupling of the two monomeric naphthol units in perylenequinone biosynthesis is catalyzed by the FAD-dependent monooxygenase elcE and the multicopper oxidase elcG. ElcG might catalyze the first intermolecular coupling in a regio- and stereo-selective manner via a phenol radical coupling mechanism and the elcE could forge the second C-C bond intramolecularly via a hydride transfer mechanism. The fasciclin domain-containing protein elcF might also play a role duting this step. The last piece of the puzzle in the biosynthesis of elsinochrome C is the additional annulation by enolate coupling to afford the dihydrobenzo(ghi)perylenequinone system, catalyzed by the FAD-dependent monooxygenase elcH. The sequence is that of Elsinochrome C biosynthesis cluster protein SNOG_08613 from Phaeosphaeria nodorum (strain SN15 / ATCC MYA-4574 / FGSC 10173) (Glume blotch fungus).